The primary structure comprises 199 residues: SCO2-like protein RBE_0029 (199 aa).

It belongs to the SCO1/2 family.

The protein is SCO2-like protein RBE_0029 of Rickettsia bellii (strain RML369-C).